The following is a 526-amino-acid chain: Glucose-6-phosphate isomerase (526 aa).

Glu-347 acts as the Proton donor in catalysis. Residues His-378 and Lys-493 contribute to the active site.

The protein belongs to the GPI family.

The protein resides in the cytoplasm. The enzyme catalyses alpha-D-glucose 6-phosphate = beta-D-fructose 6-phosphate. It participates in carbohydrate biosynthesis; gluconeogenesis. It functions in the pathway carbohydrate degradation; glycolysis; D-glyceraldehyde 3-phosphate and glycerone phosphate from D-glucose: step 2/4. Its function is as follows. Catalyzes the reversible isomerization of glucose-6-phosphate to fructose-6-phosphate. The protein is Glucose-6-phosphate isomerase of Chlamydia pneumoniae (Chlamydophila pneumoniae).